The chain runs to 441 residues: Velvet complex subunit B (441 aa).

The Velvet domain maps to 1–173 (MSTLGQGDFE…SDQGVRLRLR (173 aa)). 3 disordered regions span residues 200–220 (GYLP…PHHL), 234–295 (RSRS…ETDT), and 341–396 (MPSP…PSYA). Composition is skewed to low complexity over residues 272-283 (DGASPDSPHPSS) and 361-375 (PAGA…FSPG).

This sequence belongs to the velvet family. VelB subfamily. As to quaternary structure, component of the heterotrimeric velvet complex composed of laeA, veA and velB; VeA acting as a bridging protein between laeA and velB.

It localises to the nucleus. Its subcellular location is the cytoplasm. In terms of biological role, component of the velvet transcription factor complex that controls sexual/asexual developmental ratio in response to light, promoting sexual development in the darkness while stimulating asexual sporulation under illumination. The velvet complex acts as a global regulator for secondary metabolite gene expression and is required for the production of chaetoglobosin A. The sequence is that of Velvet complex subunit B from Chaetomium globosum (strain ATCC 6205 / CBS 148.51 / DSM 1962 / NBRC 6347 / NRRL 1970) (Soil fungus).